A 349-amino-acid polypeptide reads, in one-letter code: Anthranilate phosphoribosyltransferase (349 aa).

5-phospho-alpha-D-ribose 1-diphosphate-binding positions include Gly82, 85 to 86 (GD), 92 to 95 (NVSS), 110 to 118 (KHGNRAVSG), and Ser122. Gly82 contacts anthranilate. Ser94 serves as a coordination point for Mg(2+). Asn113 provides a ligand contact to anthranilate. Arg168 serves as a coordination point for anthranilate. Mg(2+)-binding residues include Asp227 and Glu228.

The protein belongs to the anthranilate phosphoribosyltransferase family. As to quaternary structure, homodimer. It depends on Mg(2+) as a cofactor.

It carries out the reaction N-(5-phospho-beta-D-ribosyl)anthranilate + diphosphate = 5-phospho-alpha-D-ribose 1-diphosphate + anthranilate. It participates in amino-acid biosynthesis; L-tryptophan biosynthesis; L-tryptophan from chorismate: step 2/5. Functionally, catalyzes the transfer of the phosphoribosyl group of 5-phosphorylribose-1-pyrophosphate (PRPP) to anthranilate to yield N-(5'-phosphoribosyl)-anthranilate (PRA). The chain is Anthranilate phosphoribosyltransferase from Pseudomonas paraeruginosa (strain DSM 24068 / PA7) (Pseudomonas aeruginosa (strain PA7)).